A 174-amino-acid chain; its full sequence is uncharacterized protein (174 aa).

This is an uncharacterized protein from Archaeoglobus fulgidus (strain ATCC 49558 / DSM 4304 / JCM 9628 / NBRC 100126 / VC-16).